Reading from the N-terminus, the 207-residue chain is Ribosomal RNA small subunit methyltransferase G (207 aa).

Residues Gly75, Met80, 126-127, and Arg141 each bind S-adenosyl-L-methionine; that span reads VE.

This sequence belongs to the methyltransferase superfamily. RNA methyltransferase RsmG family.

It localises to the cytoplasm. The catalysed reaction is guanosine(527) in 16S rRNA + S-adenosyl-L-methionine = N(7)-methylguanosine(527) in 16S rRNA + S-adenosyl-L-homocysteine. Functionally, specifically methylates the N7 position of guanine in position 527 of 16S rRNA. This is Ribosomal RNA small subunit methyltransferase G from Laribacter hongkongensis (strain HLHK9).